A 195-amino-acid chain; its full sequence is Peptidyl-tRNA hydrolase (195 aa).

Y17 contributes to the tRNA binding site. H22 serves as the catalytic Proton acceptor. 3 residues coordinate tRNA: F68, N70, and N116.

The protein belongs to the PTH family. As to quaternary structure, monomer.

Its subcellular location is the cytoplasm. The enzyme catalyses an N-acyl-L-alpha-aminoacyl-tRNA + H2O = an N-acyl-L-amino acid + a tRNA + H(+). Functionally, hydrolyzes ribosome-free peptidyl-tRNAs (with 1 or more amino acids incorporated), which drop off the ribosome during protein synthesis, or as a result of ribosome stalling. Catalyzes the release of premature peptidyl moieties from peptidyl-tRNA molecules trapped in stalled 50S ribosomal subunits, and thus maintains levels of free tRNAs and 50S ribosomes. This Shewanella denitrificans (strain OS217 / ATCC BAA-1090 / DSM 15013) protein is Peptidyl-tRNA hydrolase.